The following is a 244-amino-acid chain: Tabinhibitin 8 (244 aa).

A signal peptide spans 1–23 (MTSILVSRFKISALTLQYATSDS). Residues 67-194 (YTGGGIIVLR…KTPLFFSSNC (128 aa)) enclose the SCP domain. Residues 143–145 (RGD) carry the Cell attachment site motif.

The protein belongs to the CRISP family. In terms of tissue distribution, expressed in salivary glands.

Its subcellular location is the secreted. Functionally, inhibits platelet aggregation induced by all agonists tested (ADP, arachidonic acid, the thromboxane A2 analog U46619, thrombin, and snake venom snaclecs (TMVA that activates platelet through GPIB, and stejnulxin that specifically acts through GPVI (GP6))). May act by competing with fibrinogen for binding to glycoprotein IIb/IIIa (ITGA2B/ITGB3). In Tabanus yao (Horsefly), this protein is Tabinhibitin 8.